We begin with the raw amino-acid sequence, 649 residues long: tRNA-guanine(15) transglycosylase (649 aa).

The active-site Nucleophile is the D88. 2 residues coordinate substrate: D123 and A194. Residues C280, C282, and C285 each contribute to the Zn(2+) site. The region spanning 573–648 (KYRIVIDSSV…VAATLRGGLK (76 aa)) is the PUA domain.

It belongs to the archaeosine tRNA-ribosyltransferase family. It depends on Zn(2+) as a cofactor.

It catalyses the reaction guanosine(15) in tRNA + 7-cyano-7-deazaguanine = 7-cyano-7-carbaguanosine(15) in tRNA + guanine. Its pathway is tRNA modification; archaeosine-tRNA biosynthesis. In terms of biological role, exchanges the guanine residue with 7-cyano-7-deazaguanine (preQ0) at position 15 in the dihydrouridine loop (D-loop) of archaeal tRNAs. The protein is tRNA-guanine(15) transglycosylase of Methanococcus maripaludis (strain DSM 14266 / JCM 13030 / NBRC 101832 / S2 / LL).